The following is a 468-amino-acid chain: POC1 centriolar protein homolog B (468 aa).

WD repeat units lie at residues 16-55 (GHKD…RAYK), 58-97 (GHKE…ESTV), 100-139 (AHTA…FLFS), 142-181 (QHTN…CINT), 184-223 (DYKG…LLQH), 226-265 (VHNA…LIYT), and 268-307 (GHQG…YSVK). Residues 420-459 (NTLEQIVDQLNVLTQTVSILEHRLTLTEDKLKECLENQQK) are a coiled coil.

This sequence belongs to the WD repeat POC1 family. In terms of assembly, interacts with pat. As to expression, highly expressed in ovary and, at low levels, in testis.

It localises to the cytoplasm. The protein localises to the cytoskeleton. Its subcellular location is the microtubule organizing center. The protein resides in the centrosome. It is found in the centriole. Functionally, plays an important role in centriole assembly and/or stability and ciliogenesis. Involved in early steps of centriole duplication, as well as in the later steps of centriole length control. This Xenopus laevis (African clawed frog) protein is POC1 centriolar protein homolog B (poc1b).